The following is a 956-amino-acid chain: Chromatin assembly factor 1 subunit A (956 aa).

The segment at 1–49 (MLEELECGAPGARGAATAMDCKDRPAFPVKKLIQARLPFKRLNLVPKGK) is binds to PCNA. Residues 1-314 (MLEELECGAP…QHSSTSPFPT (314 aa)) form a binds to CBX1 chromo shadow domain region. 2 disordered regions span residues 45-65 (VPKG…QSKS) and 122-155 (DSNE…EDTG). Residues 56 to 65 (DQGTSVQSKS) show a composition bias toward polar residues. 5 positions are modified to phosphoserine: S65, S123, S138, S141, and S143. A Glycyl lysine isopeptide (Lys-Gly) (interchain with G-Cter in SUMO1); alternate cross-link involves residue K182. K182 is covalently cross-linked (Glycyl lysine isopeptide (Lys-Gly) (interchain with G-Cter in SUMO2); alternate). Residues 188–222 (VGCGGAGRRGDSQECSPRSCPELTSGPRMCPRKEQ) are disordered. A phosphoserine mark is found at S206 and S224. Residues 233-246 (FKGKVPMVVLQDIL) carry the PxVxL motif motif. Disordered stretches follow at residues 250 to 432 (PPQI…KRLR) and 599 to 639 (DSDE…VPHG). Composition is skewed to low complexity over residues 282 to 296 (LSHS…TSSP) and 307 to 317 (SSTSPFPTSTP). S310 bears the Phosphoserine mark. A compositionally biased stretch (basic and acidic residues) spans 329-432 (STEKNKLRLQ…RKKEEEKRLR (104 aa)). Composition is skewed to acidic residues over residues 599 to 610 (DSDEEWEEEEPG) and 618 to 633 (GDDD…EDDG). The tract at residues 642-678 (SEDEGVTEECADPENHKVRQKLKAKEWDEFLAKGKRF) is necessary for homodimerization and competence for chromatin assembly. The binds to p60 stretch occupies residues 660–956 (RQKLKAKEWD…TLTASPLGAS (297 aa)). T722 carries the post-translational modification Phosphothreonine. The tract at residues 765-790 (LLSNHTGSPRSPSTTYLHTPTPSEDA) is disordered. The span at 767-786 (SNHTGSPRSPSTTYLHTPTP) shows a compositional bias: polar residues. Residues S772, S775, and S803 each carry the phosphoserine modification. Disordered stretches follow at residues 844-873 (SVPS…KRKS) and 933-956 (SGAG…LGAS). The segment covering 855–866 (SVPSTGPSQGTP) has biased composition (polar residues). At T865 the chain carries Phosphothreonine. Residues S868, S873, and S951 each carry the phosphoserine modification.

The protein belongs to the CHAF1A family. As to quaternary structure, homodimer. Part of the CAF-1 complex that contains RBBP4, CHAF1B and CHAF1A. CHAF1A binds directly to CHAF1B. Only minor amounts of RBBP4 are complexed with CHAF1A and CHAF1B in G1 phase. Interacts with PCNA; the interaction is direct. Interacts (via the PxVxL motif) with CBX5; the interaction is direct. Interacts with MBD1. Interacts with histones H3.1, H3.2 and H3.1t.

Its subcellular location is the nucleus. Functionally, acts as a component of the histone chaperone complex chromatin assembly factor 1 (CAF-1), which assembles histone octamers onto DNA during replication and repair. CAF-1 performs the first step of the nucleosome assembly process, bringing newly synthesized histones H3 and H4 to replicating DNA; histones H2A/H2B can bind to this chromatin precursor subsequent to DNA replication to complete the histone octamer. It may play a role in heterochromatin maintenance in proliferating cells by bringing newly synthesized cbx proteins to heterochromatic DNA replication foci. The protein is Chromatin assembly factor 1 subunit A of Homo sapiens (Human).